The following is a 79-amino-acid chain: Small ribosomal subunit protein bS18c (79 aa).

This sequence belongs to the bacterial ribosomal protein bS18 family. Part of the 30S ribosomal subunit.

It is found in the plastid. The protein localises to the chloroplast. The sequence is that of Small ribosomal subunit protein bS18c from Physcomitrium patens (Spreading-leaved earth moss).